The following is a 445-amino-acid chain: Phosphoglucosamine mutase (445 aa).

S102 (phosphoserine intermediate) is an active-site residue. 4 residues coordinate Mg(2+): S102, D241, D243, and D245. S102 bears the Phosphoserine mark.

It belongs to the phosphohexose mutase family. Mg(2+) is required as a cofactor. Activated by phosphorylation.

It carries out the reaction alpha-D-glucosamine 1-phosphate = D-glucosamine 6-phosphate. Functionally, catalyzes the conversion of glucosamine-6-phosphate to glucosamine-1-phosphate. This Rhodococcus erythropolis (strain PR4 / NBRC 100887) protein is Phosphoglucosamine mutase.